The sequence spans 70 residues: Large ribosomal subunit protein eL38 (70 aa).

It belongs to the eukaryotic ribosomal protein eL38 family.

In Plutella xylostella (Diamondback moth), this protein is Large ribosomal subunit protein eL38 (RpL38).